Here is a 315-residue protein sequence, read N- to C-terminus: MKIFFVSSSFIALEVFKEILRHYEVVGVLTLPDKPKGRGQKLSQNVIKVEAIAKDIKVFDPLILDNNTLNSIRDLNPDLMLVFSYGKIFKKEFLDIFRMGCINVHPSLLPKYRGVSPIQSAILNGDCVSGITIQSMALEMDSGNILVQKKFKIRSYDTSYDISKLVSSLSPSLVLEALEKISKGFLGIPQKSSEATFCSFLKKELGFIDFNLSSFEIKNRINACNPWPLVRAKLDYSDIIFHRADFWEIDLYKERKVGEIVDFDPERGLFVNTGKGILFLLEVQRPGRRVLDFKSFYNGSRQLIGRVFSSVGGIY.

(6S)-5,6,7,8-tetrahydrofolate is bound at residue 107–110 (SLLP).

Belongs to the Fmt family.

It catalyses the reaction L-methionyl-tRNA(fMet) + (6R)-10-formyltetrahydrofolate = N-formyl-L-methionyl-tRNA(fMet) + (6S)-5,6,7,8-tetrahydrofolate + H(+). Its function is as follows. Attaches a formyl group to the free amino group of methionyl-tRNA(fMet). The formyl group appears to play a dual role in the initiator identity of N-formylmethionyl-tRNA by promoting its recognition by IF2 and preventing the misappropriation of this tRNA by the elongation apparatus. This Borrelia garinii subsp. bavariensis (strain ATCC BAA-2496 / DSM 23469 / PBi) (Borreliella bavariensis) protein is Methionyl-tRNA formyltransferase.